A 232-amino-acid polypeptide reads, in one-letter code: MNALVICSGGLDSVSLAHKVATEQKLIGLLSFDYGQRHKKELGFAAICAKRLAVPHQIVDIRDVGRNLSGSALTDNVDVPDGHYAEDSMRITVVPNRNAIMLAIAFGVAAAKKADAVATAVHGGDHFIYPDCRPAFIDAFQTMQNHALAGYADIRLYAPYVNMSKADIVSEGAKYATPFEATWSCYKGGARHCGRCGTCVERREAFDLAGITDPTDYEDADFWLHAIQTRSA.

ATP is bound at residue 7-17; that stretch reads CSGGLDSVSLA. The Zn(2+) site is built by cysteine 185, cysteine 193, cysteine 196, and cysteine 199.

It belongs to the QueC family. The cofactor is Zn(2+).

The enzyme catalyses 7-carboxy-7-deazaguanine + NH4(+) + ATP = 7-cyano-7-deazaguanine + ADP + phosphate + H2O + H(+). It functions in the pathway purine metabolism; 7-cyano-7-deazaguanine biosynthesis. In terms of biological role, catalyzes the ATP-dependent conversion of 7-carboxy-7-deazaguanine (CDG) to 7-cyano-7-deazaguanine (preQ(0)). The polypeptide is 7-cyano-7-deazaguanine synthase 1 (Mesorhizobium japonicum (strain LMG 29417 / CECT 9101 / MAFF 303099) (Mesorhizobium loti (strain MAFF 303099))).